Consider the following 68-residue polypeptide: Probable tautomerase jhp_0858 (68 aa).

Proline 2 serves as the catalytic Proton acceptor; via imino nitrogen.

Belongs to the 4-oxalocrotonate tautomerase family.

The chain is Probable tautomerase jhp_0858 from Helicobacter pylori (strain J99 / ATCC 700824) (Campylobacter pylori J99).